The chain runs to 109 residues: U4-lycotoxin-Ls1c (109 aa).

Positions 1-22 (MKVLVLFSVLFLTLFSYSSTEA) are cleaved as a signal peptide. Positions 23–44 (IDEFDSDAEDDMLSLMANEQVR) are excised as a propeptide. The tract at residues 45-88 (AKACTPRLHDCSHDRHSCCRGELFKDVCYCFYPEGEDITEVCSC) is knottin domain. Intrachain disulfides connect Cys-48/Cys-63, Cys-55/Cys-72, Cys-62/Cys-88, and Cys-74/Cys-86. The tract at residues 89 to 108 (QQPKSHKYIEKVVDKAKTVV) is linear cationic cytotoxin domain.

Belongs to the neurotoxin 19 (CSTX) family. 05 (U4-Lctx) subfamily. In terms of tissue distribution, expressed by the venom gland.

It is found in the secreted. Its function is as follows. Enhances the high-affinity desensitization of human P2RX3 purinoceptors. The polypeptide is U4-lycotoxin-Ls1c (Lycosa singoriensis (Wolf spider)).